A 154-amino-acid polypeptide reads, in one-letter code: Lipoprotein signal peptidase (154 aa).

Transmembrane regions (helical) follow at residues 8–28 (AFFL…YWAL), 36–56 (IVVN…AFSF), 66–86 (WLFA…LLTK), and 88–108 (HHWL…GNLY). Active-site residues include D118 and D136. Residues 129–149 (WPVFNLADVAITLGVILMLIA) traverse the membrane as a helical segment.

This sequence belongs to the peptidase A8 family.

It is found in the cell inner membrane. The catalysed reaction is Release of signal peptides from bacterial membrane prolipoproteins. Hydrolyzes -Xaa-Yaa-Zaa-|-(S,diacylglyceryl)Cys-, in which Xaa is hydrophobic (preferably Leu), and Yaa (Ala or Ser) and Zaa (Gly or Ala) have small, neutral side chains.. It participates in protein modification; lipoprotein biosynthesis (signal peptide cleavage). This protein specifically catalyzes the removal of signal peptides from prolipoproteins. The protein is Lipoprotein signal peptidase of Dichelobacter nodosus (strain VCS1703A).